Reading from the N-terminus, the 320-residue chain is Lipoyl synthase (320 aa).

C67, C72, C78, C93, C97, C100, and S307 together coordinate [4Fe-4S] cluster. Residues 79-296 (FNHGTATFMI…RDKAQAMGFE (218 aa)) form the Radical SAM core domain.

It belongs to the radical SAM superfamily. Lipoyl synthase family. [4Fe-4S] cluster is required as a cofactor.

Its subcellular location is the cytoplasm. The catalysed reaction is [[Fe-S] cluster scaffold protein carrying a second [4Fe-4S](2+) cluster] + N(6)-octanoyl-L-lysyl-[protein] + 2 oxidized [2Fe-2S]-[ferredoxin] + 2 S-adenosyl-L-methionine + 4 H(+) = [[Fe-S] cluster scaffold protein] + N(6)-[(R)-dihydrolipoyl]-L-lysyl-[protein] + 4 Fe(3+) + 2 hydrogen sulfide + 2 5'-deoxyadenosine + 2 L-methionine + 2 reduced [2Fe-2S]-[ferredoxin]. It participates in protein modification; protein lipoylation via endogenous pathway; protein N(6)-(lipoyl)lysine from octanoyl-[acyl-carrier-protein]: step 2/2. Functionally, catalyzes the radical-mediated insertion of two sulfur atoms into the C-6 and C-8 positions of the octanoyl moiety bound to the lipoyl domains of lipoate-dependent enzymes, thereby converting the octanoylated domains into lipoylated derivatives. The polypeptide is Lipoyl synthase (Pasteurella multocida (strain Pm70)).